The primary structure comprises 232 residues: Urease accessory protein UreF (232 aa).

It belongs to the UreF family. UreD, UreF and UreG form a complex that acts as a GTP-hydrolysis-dependent molecular chaperone, activating the urease apoprotein by helping to assemble the nickel containing metallocenter of UreC. The UreE protein probably delivers the nickel.

The protein localises to the cytoplasm. Required for maturation of urease via the functional incorporation of the urease nickel metallocenter. In Azorhizobium caulinodans (strain ATCC 43989 / DSM 5975 / JCM 20966 / LMG 6465 / NBRC 14845 / NCIMB 13405 / ORS 571), this protein is Urease accessory protein UreF.